A 246-amino-acid polypeptide reads, in one-letter code: Probable septum site-determining protein MinC (246 aa).

Belongs to the MinC family. Interacts with MinD and FtsZ.

Its function is as follows. Cell division inhibitor that blocks the formation of polar Z ring septums. Rapidly oscillates between the poles of the cell to destabilize FtsZ filaments that have formed before they mature into polar Z rings. Prevents FtsZ polymerization. The polypeptide is Probable septum site-determining protein MinC (Pseudomonas syringae pv. syringae (strain B728a)).